Reading from the N-terminus, the 284-residue chain is Four and a half LIM domains protein 5 (284 aa).

A C4-type zinc finger spans residues 8–32 (CQYCTSSLIGKKYVLKDDNLYCISC). LIM zinc-binding domains lie at 39-100 (NYCE…ECSS), 101-160 (KCFH…KEFA), and 161-220 (HYCN…LYAK).

Interacts with CREM (via the third LIM domain). Interacts (via second LIM domain) with SPAG8. In terms of tissue distribution, testis-specific, temporal expression is coordinated with CREM.

It is found in the nucleus. In terms of biological role, may be involved in the regulation of spermatogenesis. Stimulates CREM transcriptional activity in a phosphorylation-independent manner. This chain is Four and a half LIM domains protein 5 (Fhl5), found in Mus musculus (Mouse).